Reading from the N-terminus, the 805-residue chain is MSSSSWLLLSLVAVTTAQSLTEENAKTFLNNFNQEAEDLSYQSSLASWNYNTNITEENAQKMSEAAAKWSAFYEEQSKTAQSFSLQEIQTPIIKRQLQALQQSGSSALSADKNKQLNTILNTMSTIYSTGKVCNPKNPQECLLLEPGLDEIMATSTDYNSRLWAWEGWRAEVGKQLRPLYEEYVVLKNEMARANNYNDYGDYWRGDYEAEGADGYNYNRNQLIEDVERTFAEIKPLYEHLHAYVRRKLMDTYPSYISPTGCLPAHLLGDMWGRFWTNLYPLTVPFAQKPNIDVTDAMMNQGWDAERIFQEAEKFFVSVGLPHMTQGFWANSMLTEPADGRKVVCHPTAWDLGHGDFRIKMCTKVTMDNFLTAHHEMGHIQYDMAYARQPFLLRNGANEGFHEAVGEIMSLSAATPKHLKSIGLLPSDFQEDSETEINFLLKQALTIVGTLPFTYMLEKWRWMVFRGEIPKEQWMKKWWEMKREIVGVVEPLPHDETYCDPASLFHVSNDYSFIRYYTRTIYQFQFQEALCQAAKYNGSLHKCDISNSTEAGQKLLKMLSLGNSEPWTKALENVVGARNMDVKPLLNYFQPLFDWLKEQNRNSFVGWNTEWSPYADQSIKVRISLKSALGANAYEWTNNEMFLFRSSVAYAMRKYFSIIKNQTVPFLEEDVRVSDLKPRVSFYFFVTSPQNVSDVIPRSEVEDAIRMSRGRINDVFGLNDNSLEFLGIHPTLEPPYQPPVTIWLIIFGVVMALVVVGIIILIVTGIKGRKKKNETKREENPYDSMDIGKGESNAGFQNSDDAQTSF.

A signal peptide spans Met-1–Ala-17. The Extracellular portion of the chain corresponds to Gln-18–Thr-740. Residues Ser-19–Asn-607 enclose the Peptidase M2 domain. N-linked (GlcNAc...) asparagine glycosylation is present at Asn-53. The cysteines at positions 133 and 141 are disulfide-linked. Arg-169 contacts chloride. Substrate-binding positions include Arg-273 and His-345–Pro-346. Cysteines 344 and 361 form a disulfide. His-374 provides a ligand contact to Zn(2+). Residue Glu-375 is the Proton acceptor of the active site. Zn(2+) is bound by residues His-378 and Glu-402. 2 residues coordinate chloride: Trp-477 and Lys-481. Residue His-505 is the Proton donor of the active site. Substrate is bound at residue Tyr-515. A disulfide bridge links Cys-530 with Cys-542. N-linked (GlcNAc...) asparagine glycosylation is found at Asn-536 and Asn-546. One can recognise a Collectrin-like domain in the interval Ala-614–Phe-805. The interval Arg-652–Lys-659 is essential for cleavage by ADAM17. N-linked (GlcNAc...) asparagine glycosylation is found at Asn-660 and Asn-690. Residues Arg-697–Gly-716 form an essential for cleavage by TMPRSS11D and TMPRSS2 region. The helical transmembrane segment at Ile-741–Ile-761 threads the bilayer. The Cytoplasmic portion of the chain corresponds to Val-762–Phe-805. Residues Lys-771 to Phe-805 are disordered. An LIR motif is present at residues Glu-778 to Ile-786. Tyr-781 carries the phosphotyrosine modification. The Endocytic sorting signal signature appears at Tyr-781–Met-784. Positions Tyr-781–Asp-785 match the SH2-binding motif. Position 783 is a phosphoserine (Ser-783). A Glycyl lysine isopeptide (Lys-Gly) (interchain with G-Cter in ubiquitin) cross-link involves residue Lys-788. The PTB signature appears at Asn-792 to Phe-795. Residues Ala-793 to Phe-805 are compositionally biased toward polar residues. Positions Thr-803–Phe-805 match the PDZ-binding motif.

The protein belongs to the peptidase M2 family. In terms of assembly, homodimer. Interacts with the catalytically active form of TMPRSS2. Interacts with SLC6A19; this interaction is essential for expression and function of SLC6A19 in intestine. Interacts with ITGA5:ITGB1. Probably interacts (via endocytic sorting signal motif) with AP2M1; the interaction is inhibited by phosphorylation of Tyr-781. Interacts (via PDZ-binding motif) with NHERF1 (via PDZ domains); the interaction may enhance ACE2 membrane residence. As to quaternary structure, (Microbial infection) Weakly interacts with SARS-CoV S protein. Zn(2+) is required as a cofactor. Chloride serves as cofactor. In terms of processing, proteolytic cleavage by ADAM17 generates a secreted form. Also cleaved by serine proteases: TMPRSS2, TMPRSS11D and HPN/TMPRSS1. Phosphorylated. Phosphorylation at Tyr-781 probably inhibits interaction with AP2M1 and enables interactions with proteins containing SH2 domains. Post-translationally, ubiquitinated. Ubiquitinated on Lys-788 via 'Lys-48'-linked ubiquitin. 'Lys-48'-linked deubiquitinated by USP50 on the Lys-788; leading to its stabilization. In terms of tissue distribution, expressed in heart, kidney and forebrain (at protein level). Expressed in the small intestine, with expression in the intestinal brush border (at protein level). Ubiquitously expressed, with highest levels in ileum, kidney and lung. In lung, expressed on vascular endothelial and airway epithelial cells. Also expressed at high levels in lung secretory club and goblet cells as well as in alveolar type 2 cells.

The protein localises to the secreted. It localises to the cell membrane. The protein resides in the cytoplasm. It is found in the cell projection. Its subcellular location is the cilium. The protein localises to the apical cell membrane. The catalysed reaction is angiotensin II + H2O = angiotensin-(1-7) + L-phenylalanine. It catalyses the reaction angiotensin I + H2O = angiotensin-(1-9) + L-leucine. The enzyme catalyses bradykinin(1-8) + H2O = bradykinin(1-7) + L-phenylalanine. It carries out the reaction neurotensin + H2O = neurotensin-(1-12) + L-leucine. The catalysed reaction is kinetensin + H2O = kinetensin-(1-8) + L-leucine. It catalyses the reaction dynorphin A-(1-13) + H2O = dynorphin A-(1-12) + L-lysine. The enzyme catalyses apelin-13 + H2O = apelin-12 + L-phenylalanine. It carries out the reaction [Pyr1]apelin-13 + H2O = [Pyr1]apelin-12 + L-phenylalanine. The catalysed reaction is apelin-17 + H2O = apelin-16 + L-phenylalanine. Essential counter-regulatory carboxypeptidase of the renin-angiotensin hormone system that is a critical regulator of blood volume, systemic vascular resistance, and thus cardiovascular homeostasis. Converts angiotensin I to angiotensin 1-9, a nine-amino acid peptide with anti-hypertrophic effects in cardiomyocytes, and angiotensin II to angiotensin 1-7, which then acts as a beneficial vasodilator and anti-proliferation agent, counterbalancing the actions of the vasoconstrictor angiotensin II. Also removes the C-terminal residue from three other vasoactive peptides, neurotensin, kinetensin, and des-Arg bradykinin, but is not active on bradykinin. Also cleaves other biological peptides, such as apelins, casomorphins and dynorphin A. By cleavage of angiotensin II, may be an important regulator of heart function. By cleavage of angiotensin II, may also have a protective role in acute lung injury. Plays an important role in amino acid transport by acting as binding partner of amino acid transporter SLC6A19, regulating its trafficking on the cell surface and its activity. The chain is Angiotensin-converting enzyme 2 (Ace2) from Mus musculus (Mouse).